Here is a 30-residue protein sequence, read N- to C-terminus: Putative cytochrome bd-II ubiquinol oxidase subunit AppX (30 aa).

The chain crosses the membrane as a helical span at residues 4 to 24 (LLWFVGILLMCSLSTLVLVWL).

Belongs to the cytochrome ubiquinol oxidase subunit X family. As to quaternary structure, able to interact with CydA and CydB upon overexpression.

The protein localises to the cell inner membrane. Might be part of cytochrome bd-II oxidase (appB and appC). Able to restore reductant resistance to a cydX deletion mutant upon overexpression. CydX and this protein may have some functional overlap. The chain is Putative cytochrome bd-II ubiquinol oxidase subunit AppX (appX) from Escherichia coli (strain K12).